The sequence spans 237 residues: MNLKDLIKLLEVKFPQIDSNEVESKITIYKNYLQQENKIHNLTRLDKEEEIYQKYFYESILNFHNDLFDNKNINLLDIGSGSGVPGIFLKILFPHINLYIVESNTKKVNFLNNLVDKLELENVFISNQRCEDYIKDKIEFFDLITCRAVAELRILLELSFPGLKINGIGFFLKSNNYLVELDNAKNISSKLKIEEEPKIETIEYDGKTFVSLKYIKKNKVNNIFPRTWKEILNNDKN.

S-adenosyl-L-methionine is bound by residues Gly79, 130–131 (CE), and Arg147.

The protein belongs to the methyltransferase superfamily. RNA methyltransferase RsmG family.

The protein localises to the cytoplasm. Its function is as follows. Specifically methylates the N7 position of a guanine in 16S rRNA. This chain is Ribosomal RNA small subunit methyltransferase G, found in Malacoplasma penetrans (strain HF-2) (Mycoplasma penetrans).